We begin with the raw amino-acid sequence, 619 residues long: Telomere repeat-binding protein 3 (619 aa).

The 80-residue stretch at 324 to 403 folds into the Ubiquitin-like domain; the sequence is VKLSIKSFRI…LDNLGFTLEP (80 aa). The HTH myb-type domain occupies 504 to 563; it reads AQRRTRRPFSVTEVEALVQAVEELGTGRWRDVKLRAFEDADHRTYVDLKDKWKTLVHTAS. The segment at residues 532–559 is a DNA-binding region (H-T-H motif); sequence WRDVKLRAFEDADHRTYVDLKDKWKTLV. Residues 593–619 form a disordered region; it reads QGKHQARGASKDPDMNRGGAFESGVSV.

As to quaternary structure, homodimer and heterodimer with TRP1. Expressed ubiquitously. Highest expression in flowers and roots.

The protein localises to the nucleus. Binds specifically to the plant telomeric double-stranded DNA sequences. At least 2 repeats of telomeric sequences are required for binding. Induces DNA bending. In Arabidopsis thaliana (Mouse-ear cress), this protein is Telomere repeat-binding protein 3 (TRP3).